The following is a 231-amino-acid chain: Chromosome partition protein MukE (231 aa).

Positions 195–231 (MIRDGEAMPVEGSLSLKDDSDDNDRTDDTAPETGEDE) are disordered. Residues 213–231 (DSDDNDRTDDTAPETGEDE) are compositionally biased toward acidic residues.

It belongs to the MukE family. Interacts, and probably forms a ternary complex, with MukF and MukB. The complex formation is stimulated by calcium or magnesium.

The protein localises to the cytoplasm. Its subcellular location is the nucleoid. In terms of biological role, involved in chromosome condensation, segregation and cell cycle progression. May participate in facilitating chromosome segregation by condensation DNA from both sides of a centrally located replisome during cell division. Probably acts via its interaction with MukB and MukF. This is Chromosome partition protein MukE from Pectobacterium atrosepticum (strain SCRI 1043 / ATCC BAA-672) (Erwinia carotovora subsp. atroseptica).